The chain runs to 574 residues: Glutamate--tRNA ligase (574 aa).

The short motif at 109-119 (PNPDFVIHMGN) is the 'HIGH' region element.

The protein belongs to the class-I aminoacyl-tRNA synthetase family. Glutamate--tRNA ligase type 2 subfamily.

It localises to the cytoplasm. The enzyme catalyses tRNA(Glu) + L-glutamate + ATP = L-glutamyl-tRNA(Glu) + AMP + diphosphate. Its function is as follows. Catalyzes the attachment of glutamate to tRNA(Glu) in a two-step reaction: glutamate is first activated by ATP to form Glu-AMP and then transferred to the acceptor end of tRNA(Glu). This chain is Glutamate--tRNA ligase, found in Aeropyrum pernix (strain ATCC 700893 / DSM 11879 / JCM 9820 / NBRC 100138 / K1).